The sequence spans 590 residues: Muscarinic acetylcholine receptor M3 (590 aa).

Residues 1–67 (MTLHNNNTTS…DPLGGHTIWQ (67 aa)) lie on the Extracellular side of the membrane. N-linked (GlcNAc...) asparagine glycans are attached at residues asparagine 6, asparagine 7, asparagine 15, asparagine 41, asparagine 48, and asparagine 53. A helical transmembrane segment spans residues 68 to 91 (VVFIAFLTGILALVTIIGNILVIV). The Cytoplasmic segment spans residues 92–104 (AFKVNKQLKTVNN). A helical membrane pass occupies residues 105-130 (YFLLSLACADLIIGVISMNLFTTYII). Over 131 to 142 (MNRWALGNLACD) the chain is Extracellular. Cysteine 141 and cysteine 221 are oxidised to a cystine. A helical transmembrane segment spans residues 143 to 164 (LWLSIDYVASNASVMNLLVISF). Residues 165-184 (DRYFSITRPLTYRAKRTTKR) are Cytoplasmic-facing. Residues 185–206 (AGVMIGLAWVISFILWAPAILF) form a helical membrane-spanning segment. The Extracellular segment spans residues 207 to 229 (WQYFVGKRTVPPGECFIQFLSEP). The chain crosses the membrane as a helical span at residues 230 to 252 (TITFGTAIAAFYMPVTIMTILYW). Residues 253 to 491 (RIYKETEKRT…SLIKEKKAAQ (239 aa)) lie on the Cytoplasmic side of the membrane. The Basolateral sorting signal motif lies at 275–281 (AEAENFV). Residues 324-357 (AEQMDQDHSSSDSWNNNDAAASLENSASSDEEDI) form a disordered region. Residues 334 to 345 (SDSWNNNDAAAS) show a composition bias toward low complexity. Serine 385 bears the Phosphoserine mark. A helical membrane pass occupies residues 492 to 514 (TLSAILLAFIITWTPYNIMVLVN). At 515 to 526 (TFCDSCIPKTYW) the chain is on the extracellular side. The cysteines at positions 517 and 520 are disulfide-linked. The helical transmembrane segment at 527-546 (NLGYWLCYINSTVNPVCYAL) threads the bilayer. Over 547 to 590 (CNKTFRTTFKMLLLCQCDKRKRRKQQYQQRQSVIFHKRVPEQAL) the chain is Cytoplasmic.

The protein belongs to the G-protein coupled receptor 1 family. Muscarinic acetylcholine receptor subfamily. CHRM3 sub-subfamily. As to quaternary structure, homodimer; the dimers can form tetramers. Interacts with NALCN. Interacts with TMEM147.

It localises to the cell membrane. Its subcellular location is the postsynaptic cell membrane. The protein localises to the basolateral cell membrane. The protein resides in the endoplasmic reticulum membrane. Functionally, the muscarinic acetylcholine receptor mediates various cellular responses, including inhibition of adenylate cyclase, breakdown of phosphoinositides and modulation of potassium channels through the action of G proteins. Primary transducing effect is Pi turnover. The polypeptide is Muscarinic acetylcholine receptor M3 (CHRM3) (Sus scrofa (Pig)).